The following is a 516-amino-acid chain: D-aminopeptidase (516 aa).

S61 serves as the catalytic Nucleophile. Catalysis depends on K64, which acts as the Proton donor/acceptor. Positions 476-486 (RRSMDAPAPGD) are important for specificity. D480 provides a ligand contact to substrate.

The protein belongs to the peptidase S12 family. As to quaternary structure, homodimer.

It carries out the reaction Release of an N-terminal D-amino acid from a peptide, Xaa-|-Yaa-, in which Xaa is preferably D-Ala, D-Ser or D-Thr. D-amino acid amides and methyl esters also are hydrolyzed, as is glycine amide.. Its activity is regulated as follows. Inhibited by beta-lactam compounds such as 6-aminopenicillic acid, 7-aminocephalosporanic acid, benzylpenicillin and ampicillin. Inhibited by p-chloromercuribenzoate. Its function is as follows. Hydrolyzes N-terminal residues in D-amino acid-containing peptides. The sequence is that of D-aminopeptidase from Cereibacter sphaeroides (strain KD131 / KCTC 12085) (Rhodobacter sphaeroides).